We begin with the raw amino-acid sequence, 282 residues long: DNA-directed RNA polymerase III subunit RPC5 (282 aa).

Residues 1-70 (MSIDNKLFVT…TGEEEEDDPV (70 aa)) form a disordered region. Composition is skewed to acidic residues over residues 10-35 (TEED…DMIA) and 60-70 (DTGEEEEDDPV). Threonine 61 carries the post-translational modification Phosphothreonine.

In terms of assembly, component of the RNA polymerase III (Pol III) complex consisting of 17 subunits. Interacts with RPC53/RPC4. RPC53/RPC4, RPC37/RPC5 and RPC11/RPC10 probably form a Pol III subcomplex.

It localises to the nucleus. In terms of biological role, DNA-dependent RNA polymerase catalyzes the transcription of DNA into RNA using the four ribonucleoside triphosphates as substrates. Specific peripheric component of RNA polymerase III which synthesizes small RNAs, such as 5S rRNA and tRNAs. The RPC53/RPC4-RPC37/RPC5 subcomplex is required for terminator recognition and reinitiation. In Saccharomyces cerevisiae (strain ATCC 204508 / S288c) (Baker's yeast), this protein is DNA-directed RNA polymerase III subunit RPC5 (RPC37).